The sequence spans 457 residues: UDP-N-acetylmuramate--L-alanine ligase (457 aa).

112–118 (GAHGKTS) serves as a coordination point for ATP.

It belongs to the MurCDEF family.

It is found in the cytoplasm. The catalysed reaction is UDP-N-acetyl-alpha-D-muramate + L-alanine + ATP = UDP-N-acetyl-alpha-D-muramoyl-L-alanine + ADP + phosphate + H(+). Its pathway is cell wall biogenesis; peptidoglycan biosynthesis. Cell wall formation. The protein is UDP-N-acetylmuramate--L-alanine ligase of Desulfosudis oleivorans (strain DSM 6200 / JCM 39069 / Hxd3) (Desulfococcus oleovorans).